We begin with the raw amino-acid sequence, 442 residues long: Histidinol dehydrogenase (442 aa).

Residues Tyr136, Gln197, and Asn220 each coordinate NAD(+). Substrate-binding residues include Ser243, Gln265, and His268. Positions 265 and 268 each coordinate Zn(2+). Catalysis depends on proton acceptor residues Glu333 and His334. The substrate site is built by His334, Asp367, Glu421, and His426. Asp367 contributes to the Zn(2+) binding site. His426 lines the Zn(2+) pocket.

It belongs to the histidinol dehydrogenase family. Zn(2+) is required as a cofactor.

The enzyme catalyses L-histidinol + 2 NAD(+) + H2O = L-histidine + 2 NADH + 3 H(+). It functions in the pathway amino-acid biosynthesis; L-histidine biosynthesis; L-histidine from 5-phospho-alpha-D-ribose 1-diphosphate: step 9/9. Its function is as follows. Catalyzes the sequential NAD-dependent oxidations of L-histidinol to L-histidinaldehyde and then to L-histidine. The chain is Histidinol dehydrogenase from Pseudomonas fluorescens (strain ATCC BAA-477 / NRRL B-23932 / Pf-5).